The sequence spans 259 residues: Isoepoxydon dehydrogenase patN (259 aa).

NADP(+)-binding residues include N96 and R125. Residues S143 and S144 each act as proton donor in the active site. The NADP(+) site is built by Y158, K162, and I191. Y158 serves as the catalytic Proton acceptor. K162 serves as the catalytic Lowers pKa of active site Tyr.

The protein belongs to the short-chain dehydrogenases/reductases (SDR) family.

It localises to the cytoplasm. Its subcellular location is the cytosol. It catalyses the reaction isoepoxydon + NADP(+) = phyllostine + NADPH + H(+). The protein operates within mycotoxin biosynthesis; patulin biosynthesis. Isoepoxydon dehydrogenase; part of the gene cluster that mediates the biosynthesis of patulin, an acetate-derived tetraketide mycotoxin produced by several fungal species that shows antimicrobial properties against several bacteria. PatN catalyzes the conversion of isoepoxydon into phyllostine. The pathway begins with the synthesis of 6-methylsalicylic acid by the polyketide synthase (PKS) patK via condensation of acetate and malonate units. The 6-methylsalicylic acid decarboxylase patG then catalyzes the decarboxylation of 6-methylsalicylic acid to yield m-cresol (also known as 3-methylphenol). These first reactions occur in the cytosol. The intermediate m-cresol is then transported into the endoplasmic reticulum where the cytochrome P450 monooxygenase patH converts it to m-hydroxybenzyl alcohol, which is further converted to gentisyl alcohol by the cytochrome P450 monooxygenase patI. The oxidoreductases patJ and patO further convert gentisyl alcohol to isoepoxydon in the vacuole. PatN catalyzes then the transformation of isoepoxydon into phyllostine. The cluster protein patF is responsible for the conversion from phyllostine to neopatulin whereas the alcohol dehydrogenase patD converts neopatulin to E-ascladiol. The steps between isoepoxydon and E-ascladiol occur in the cytosol, and E-ascladiol is probably secreted to the extracellular space by one of the cluster-specific transporters patC or patM. Finally, the secreted patulin synthase patE catalyzes the conversion of E-ascladiol to patulin. The polypeptide is Isoepoxydon dehydrogenase patN (Aspergillus clavatus (strain ATCC 1007 / CBS 513.65 / DSM 816 / NCTC 3887 / NRRL 1 / QM 1276 / 107)).